Here is a 334-residue protein sequence, read N- to C-terminus: Malate dehydrogenase, cytoplasmic (334 aa).

Position 2 is an N-acetylserine (Ser2). NAD(+) is bound by residues 11–17 and Asp42; that span reads GAAGQIA. Arg92 and Arg98 together coordinate substrate. Asn105 lines the NAD(+) pocket. Residue Lys110 is modified to N6-succinyllysine. Gln112 serves as a coordination point for NAD(+). Residues Lys118 and Lys121 each carry the N6-acetyllysine modification. 129 to 131 is a binding site for NAD(+); the sequence is VGN. Residues Asn131 and Arg162 each coordinate substrate. Catalysis depends on His187, which acts as the Proton acceptor. Lys214 carries the N6-succinyllysine modification. Ser217 bears the Phosphoserine mark. Arg230 is modified (omega-N-methylarginine). The residue at position 241 (Ser241) is a Phosphoserine. Lys298 is subject to N6-acetyllysine; alternate. The residue at position 298 (Lys298) is an N6-succinyllysine; alternate. Ser309 carries the post-translational modification Phosphoserine. Lys318 is modified (N6-succinyllysine). At Ser333 the chain carries Phosphoserine.

The protein belongs to the LDH/MDH superfamily. MDH type 2 family. In terms of assembly, homodimer. Post-translationally, ISGylated. In terms of processing, acetylation at Lys-118 dramatically enhances enzymatic activity and promotes adipogenic differentiation.

It localises to the cytoplasm. Its subcellular location is the cytosol. It carries out the reaction (S)-malate + NAD(+) = oxaloacetate + NADH + H(+). It catalyses the reaction (2R)-2-hydroxy-3-(4-hydroxyphenyl)propanoate + NAD(+) = 3-(4-hydroxyphenyl)pyruvate + NADH + H(+). The catalysed reaction is (S)-2-hydroxyglutarate + NAD(+) = 2-oxoglutarate + NADH + H(+). Catalyzes the reduction of aromatic alpha-keto acids in the presence of NADH. Plays essential roles in the malate-aspartate shuttle and the tricarboxylic acid cycle, important in mitochondrial NADH supply for oxidative phosphorylation. Catalyzes the reduction of 2-oxoglutarate to 2-hydroxyglutarate, leading to elevated reactive oxygen species (ROS). This is Malate dehydrogenase, cytoplasmic (MDH1) from Bos taurus (Bovine).